The primary structure comprises 247 residues: Osmotin-like protein OSML81 (247 aa).

Residues 1-21 form the signal peptide; it reads MGYLRSSFIFSLLAFVTYTYA. 8 disulfide bridges follow: Cys-30/Cys-225, Cys-72/Cys-82, Cys-87/Cys-93, Cys-141/Cys-213, Cys-146/Cys-196, Cys-154/Cys-164, Cys-168/Cys-177, and Cys-178/Cys-183.

It belongs to the thaumatin family.

The chain is Osmotin-like protein OSML81 from Solanum commersonii (Commerson's wild potato).